The sequence spans 492 residues: Protein nucleotidyltransferase YdiU (492 aa).

8 residues coordinate ATP: Gly-90, Gly-92, Arg-93, Lys-113, Asp-125, Gly-126, Arg-176, and Arg-183. The active-site Proton acceptor is Asp-252. The Mg(2+) site is built by Asn-253 and Asp-262. ATP is bound at residue Asp-262.

It belongs to the SELO family. The cofactor is Mg(2+). It depends on Mn(2+) as a cofactor.

It catalyses the reaction L-seryl-[protein] + ATP = 3-O-(5'-adenylyl)-L-seryl-[protein] + diphosphate. The enzyme catalyses L-threonyl-[protein] + ATP = 3-O-(5'-adenylyl)-L-threonyl-[protein] + diphosphate. It carries out the reaction L-tyrosyl-[protein] + ATP = O-(5'-adenylyl)-L-tyrosyl-[protein] + diphosphate. The catalysed reaction is L-histidyl-[protein] + UTP = N(tele)-(5'-uridylyl)-L-histidyl-[protein] + diphosphate. It catalyses the reaction L-seryl-[protein] + UTP = O-(5'-uridylyl)-L-seryl-[protein] + diphosphate. The enzyme catalyses L-tyrosyl-[protein] + UTP = O-(5'-uridylyl)-L-tyrosyl-[protein] + diphosphate. Functionally, nucleotidyltransferase involved in the post-translational modification of proteins. It can catalyze the addition of adenosine monophosphate (AMP) or uridine monophosphate (UMP) to a protein, resulting in modifications known as AMPylation and UMPylation. This Thioalkalivibrio sulfidiphilus (strain HL-EbGR7) protein is Protein nucleotidyltransferase YdiU.